The sequence spans 228 residues: 2,3-bisphosphoglycerate-dependent phosphoglycerate mutase (228 aa).

Substrate-binding positions include 8-15 (RHGQSEWN), 21-22 (TG), Arg60, 87-90 (ERHY), Lys98, 114-115 (RR), and 183-184 (GN). His9 functions as the Tele-phosphohistidine intermediate in the catalytic mechanism. Catalysis depends on Glu87, which acts as the Proton donor/acceptor.

Belongs to the phosphoglycerate mutase family. BPG-dependent PGAM subfamily.

It catalyses the reaction (2R)-2-phosphoglycerate = (2R)-3-phosphoglycerate. The protein operates within carbohydrate degradation; glycolysis; pyruvate from D-glyceraldehyde 3-phosphate: step 3/5. Catalyzes the interconversion of 2-phosphoglycerate and 3-phosphoglycerate. The sequence is that of 2,3-bisphosphoglycerate-dependent phosphoglycerate mutase from Staphylococcus epidermidis (strain ATCC 12228 / FDA PCI 1200).